Here is a 98-residue protein sequence, read N- to C-terminus: Large ribosomal subunit protein bL25 (98 aa).

The tract at residues 1–23 (MANFVLNAQARAEDKQGKGASRR) is disordered.

The protein belongs to the bacterial ribosomal protein bL25 family. As to quaternary structure, part of the 50S ribosomal subunit; part of the 5S rRNA/L5/L18/L25 subcomplex. Contacts the 5S rRNA. Binds to the 5S rRNA independently of L5 and L18.

Its function is as follows. This is one of the proteins that binds to the 5S RNA in the ribosome where it forms part of the central protuberance. The sequence is that of Large ribosomal subunit protein bL25 from Acinetobacter baumannii (strain AB307-0294).